The primary structure comprises 510 residues: Facilitated glucose transporter protein 1 (510 aa).

Positions 1–29 (MSEKSRSDTSATASLSDSSKSPSSYSTPG) are disordered. Residues 1 to 46 (MSEKSRSDTSATASLSDSSKSPSSYSTPGTTTQKIIFPDGKLTKCL) lie on the Cytoplasmic side of the membrane. The segment covering 8–29 (DTSATASLSDSSKSPSSYSTPG) has biased composition (low complexity). A helical membrane pass occupies residues 47-67 (AFSAFVITLASFQFGYHIGCV). At 68–100 (NAPGGLITEWIIGSHKDLFDKELSRENADLAWS) the chain is on the extracellular side. A helical membrane pass occupies residues 101–121 (VAVSVFAVGGMIGGLSSGWLA). At 122-127 (DKVGRR) the chain is on the cytoplasmic side. The chain crosses the membrane as a helical span at residues 128–146 (GALFYNNLLALAAAALMGL). At 147–160 (AKSVGAYPMVILGR) the chain is on the extracellular side. Residues 161–181 (LIIGLNCGFSSALVPMFLTEI) traverse the membrane as a helical segment. At 182–195 (SPNNLRGMLGSLHQ) the chain is on the cytoplasmic side. Residue Gln195 coordinates D-glucose. A helical membrane pass occupies residues 196-216 (LLVTIAILVSQIFGLPHLLGT). Topologically, residues 217-219 (GDR) are extracellular. A helical membrane pass occupies residues 220–240 (WPLIFAFTVVPAVLQLALLML). Over 241–299 (CPESPKYTMAVRGQRNEAESALKKLRDTEDVSTEIEAMQEEATAAGVQEKPKMGDMFKG) the chain is Cytoplasmic. The chain crosses the membrane as a helical span at residues 300 to 320 (ALLWPMSIAIMMMLAQQLSGI). D-glucose is bound by residues 315–316 (QQ), Asn321, and Asn352. The Extracellular segment spans residues 321–341 (NVAMFYSTVIFRGAGLTGNEP). A helical membrane pass occupies residues 342–362 (FYATIGMGAVNVIMTLISVWL). At 363–373 (VDHPKFGRRSL) the chain is on the cytoplasmic side. The helical transmembrane segment at 374–394 (LLAGLTGMFVSTLLLVGALTI) threads the bilayer. Residues 395–409 (QNSGGDKWASYSAIG) are Extracellular-facing. The chain crosses the membrane as a helical span at residues 410-430 (FVLLFVISFATGPGAIPWFFV). Trp427 contacts D-glucose. Residues 431–445 (SEIFDSSARGNANSI) lie on the Cytoplasmic side of the membrane. Residues 446 to 464 (AVMVNWAANLLVGLTFLPI) traverse the membrane as a helical segment. Residues 465 to 470 (NNLMQQ) lie on the Extracellular side of the membrane. A helical transmembrane segment spans residues 471–491 (YSFFIFSGFLAFFIFYTWKFV). At 492-510 (PETKGKSIEQIQAEFEKRK) the chain is on the cytoplasmic side.

The protein belongs to the major facilitator superfamily. Sugar transporter (TC 2.A.1.1) family. Glucose transporter subfamily. As to expression, isoform a is expressed in pharyngeal muscle and intestinal cells in both embryos and adults (at protein level).

The protein resides in the cell membrane. It is found in the basolateral cell membrane. In terms of biological role, facilitative glucose transporter that plays a role in glucose metabolism and regulation of longevity. May also play a role in lipid metabolism. Glucose transport activity of isoform a is competitively inhibited by mannose, galactose and fructose, suggesting ability to transport also other hexose sugars. The polypeptide is Facilitated glucose transporter protein 1 (Caenorhabditis elegans).